The primary structure comprises 234 residues: DNA repair protein RecO (234 aa).

It belongs to the RecO family.

Its function is as follows. Involved in DNA repair and RecF pathway recombination. The sequence is that of DNA repair protein RecO from Alteromonas mediterranea (strain DSM 17117 / CIP 110805 / LMG 28347 / Deep ecotype).